The primary structure comprises 485 residues: Rhamnulokinase (485 aa).

Residue 8–12 (ASSGR) coordinates ATP. Substrate contacts are provided by residues glycine 78 and 231 to 233 (HDT). Aspartate 232 functions as the Proton acceptor in the catalytic mechanism. ATP is bound at residue threonine 254. Asparagine 291 contributes to the substrate binding site. Glutamine 299 serves as a coordination point for ATP. An intrachain disulfide couples cysteine 348 to cysteine 365. Glycine 397 lines the ATP pocket. Cysteine 408 and cysteine 412 are joined by a disulfide.

The protein belongs to the rhamnulokinase family. The cofactor is Mg(2+).

It carries out the reaction L-rhamnulose + ATP = L-rhamnulose 1-phosphate + ADP + H(+). It participates in carbohydrate degradation; L-rhamnose degradation; glycerone phosphate from L-rhamnose: step 2/3. In terms of biological role, involved in the catabolism of L-rhamnose (6-deoxy-L-mannose). Catalyzes the transfer of the gamma-phosphate group from ATP to the 1-hydroxyl group of L-rhamnulose to yield L-rhamnulose 1-phosphate. The chain is Rhamnulokinase from Yersinia pestis bv. Antiqua (strain Angola).